The primary structure comprises 533 residues: MSAQRQFSEDLWDKFESVVKKVDNGKIFTQQLSKFLSKQQQIESAYAKSLVKLCKDKSFAPEVEMGTLRDSFQCYREQLELIGALHEEFSNRLEKLVTIGIDGYLEESRKQRKALIANGEKCTKDLKTAESNESKAKQNYEKLKRKQEEANEDLSKQPPGAKEQKARKTLESATKAADKGDNEYRESVKCLQQNQQKFYHEEMPRILDDLQRFEVERIDKSKDWLMEVITQNELVPPAVIIHNENIKKGIESIDRERDLQNYILVTMSGAQKPPEAQYEPYQSGGGFAIVNSSSNSNLNISRKSGELNGGGSIQNGASIISSPQQPQYQNIDHQTPPQPNIIIQQHQQSNNNNNTNNNSNVMTTPPPPQPQPQQQQLPQPTQLNNPPQPPISLSKNDSSNSINSNSNGEIVRALYDYNATEENEISFKANALIKVVLRDESGWWQGMVIGESDRIGVFPSNFISDSSDSSKKRVDVAGRKCKVLYDYRTDCEGELNIKEGEILTIEYEDEGWFFGSNESNVSARFPSNYVQVI.

Residues 5-258 (RQFSEDLWDK…GIESIDRERD (254 aa)) enclose the F-BAR domain. Positions 76–186 (REQLELIGAL…ADKGDNEYRE (111 aa)) form a coiled coil. Basic and acidic residues-rich tracts occupy residues 126 to 155 (LKTA…EDLS) and 162 to 184 (KEQK…DNEY). Disordered regions lie at residues 126-184 (LKTA…DNEY) and 301-405 (SRKS…INSN). Low complexity-rich tracts occupy residues 318–327 (SIISSPQQPQ), 340–360 (NIII…NNSN), 372–385 (PQQQ…QLNN), and 392–405 (SLSK…INSN). SH3 domains lie at 406–468 (SNGE…DSSD) and 476–533 (VAGR…VQVI).

This chain is SH3 and F-BAR domain-containing protein DDB_G0271676, found in Dictyostelium discoideum (Social amoeba).